A 1365-amino-acid chain; its full sequence is Polyprotein ABA-1 (1365 aa).

The protein belongs to the NPA family. Nematode polyprotein allergens (NPAs) are synthesized as large polypeptides that are subsequently proteolytically cleaved to active polypeptide units. Pseudocoelomic fluid.

Functionally, has high binding affinity for fatty acids and retinoids. In Ascaris suum (Pig roundworm), this protein is Polyprotein ABA-1 (ABA-1).